A 274-amino-acid chain; its full sequence is Bis(5'-nucleosyl)-tetraphosphatase, symmetrical (274 aa).

This sequence belongs to the Ap4A hydrolase family.

It carries out the reaction P(1),P(4)-bis(5'-adenosyl) tetraphosphate + H2O = 2 ADP + 2 H(+). In terms of biological role, hydrolyzes diadenosine 5',5'''-P1,P4-tetraphosphate to yield ADP. This chain is Bis(5'-nucleosyl)-tetraphosphatase, symmetrical, found in Janthinobacterium sp. (strain Marseille) (Minibacterium massiliensis).